The chain runs to 327 residues: MIPGPATLPDLLDRLHVVALPMRVRFRGITTREVALIEGPSGWGEFGAFLEYQPPEAAAWLASAIDAAYGQPPPVRRGRIPINATVPAVPPAQVPELLARFPGARTAKVKVAEPGQTLASDVERVNAVRALVPTVRVDANGGWSVDQAAQAAVALTADGPLEYLEQPCATVGELAELRRRIEVPIAADEAIRKAEDPLAVVRAGAADVAVLKVAPLGGVWALLDIAAQIDIPVVISSALDSAVGIAAGLSAAAALPQLQHACGLGTGGLFVEDVAEPAIPVDGALAPQRVVPDPARLRALGAAPDRRQWWIDRIKACYPLLYRRSGD.

The active-site Proton donor is Lys-110. Mg(2+) contacts are provided by Asp-138, Glu-165, and Asp-188. The active-site Proton acceptor is Lys-212.

It belongs to the mandelate racemase/muconate lactonizing enzyme family. MenC type 1 subfamily. A divalent metal cation is required as a cofactor.

The enzyme catalyses (1R,6R)-6-hydroxy-2-succinyl-cyclohexa-2,4-diene-1-carboxylate = 2-succinylbenzoate + H2O. The protein operates within quinol/quinone metabolism; 1,4-dihydroxy-2-naphthoate biosynthesis; 1,4-dihydroxy-2-naphthoate from chorismate: step 4/7. Its pathway is quinol/quinone metabolism; menaquinone biosynthesis. Converts 2-succinyl-6-hydroxy-2,4-cyclohexadiene-1-carboxylate (SHCHC) to 2-succinylbenzoate (OSB). The protein is o-succinylbenzoate synthase of Mycobacterium marinum (strain ATCC BAA-535 / M).